The following is a 172-amino-acid chain: Small ribosomal subunit protein uS5 (172 aa).

Residues 17–80 (LKEKMIAVNR…EEARRNMTKV (64 aa)) form the S5 DRBM domain.

This sequence belongs to the universal ribosomal protein uS5 family. Part of the 30S ribosomal subunit. Contacts proteins S4 and S8.

Its function is as follows. With S4 and S12 plays an important role in translational accuracy. Located at the back of the 30S subunit body where it stabilizes the conformation of the head with respect to the body. In Polaromonas sp. (strain JS666 / ATCC BAA-500), this protein is Small ribosomal subunit protein uS5.